The chain runs to 171 residues: 3-hydroxydecanoyl-[acyl-carrier-protein] dehydratase (171 aa).

Residue histidine 70 is part of the active site.

Belongs to the thioester dehydratase family. FabA subfamily. In terms of assembly, homodimer.

The protein localises to the cytoplasm. The catalysed reaction is a (3R)-hydroxyacyl-[ACP] = a (2E)-enoyl-[ACP] + H2O. It carries out the reaction (3R)-hydroxydecanoyl-[ACP] = (2E)-decenoyl-[ACP] + H2O. The enzyme catalyses (2E)-decenoyl-[ACP] = (3Z)-decenoyl-[ACP]. It participates in lipid metabolism; fatty acid biosynthesis. Necessary for the introduction of cis unsaturation into fatty acids. Catalyzes the dehydration of (3R)-3-hydroxydecanoyl-ACP to E-(2)-decenoyl-ACP and then its isomerization to Z-(3)-decenoyl-ACP. Can catalyze the dehydratase reaction for beta-hydroxyacyl-ACPs with saturated chain lengths up to 16:0, being most active on intermediate chain length. The protein is 3-hydroxydecanoyl-[acyl-carrier-protein] dehydratase of Shewanella putrefaciens (strain CN-32 / ATCC BAA-453).